A 307-amino-acid polypeptide reads, in one-letter code: Quinolinate synthase (307 aa).

The iminosuccinate site is built by histidine 20 and serine 37. Cysteine 82 is a binding site for [4Fe-4S] cluster. Residues 108 to 110 (YIN) and serine 125 each bind iminosuccinate. Cysteine 168 contributes to the [4Fe-4S] cluster binding site. Iminosuccinate-binding positions include 194-196 (HPE) and threonine 219. Cysteine 264 contributes to the [4Fe-4S] cluster binding site.

The protein belongs to the quinolinate synthase family. Type 2 subfamily. The cofactor is [4Fe-4S] cluster.

It is found in the cytoplasm. The catalysed reaction is iminosuccinate + dihydroxyacetone phosphate = quinolinate + phosphate + 2 H2O + H(+). Its pathway is cofactor biosynthesis; NAD(+) biosynthesis; quinolinate from iminoaspartate: step 1/1. In terms of biological role, catalyzes the condensation of iminoaspartate with dihydroxyacetone phosphate to form quinolinate. This Pyrobaculum aerophilum (strain ATCC 51768 / DSM 7523 / JCM 9630 / CIP 104966 / NBRC 100827 / IM2) protein is Quinolinate synthase.